We begin with the raw amino-acid sequence, 405 residues long: Phosphoglycerate kinase (405 aa).

Residues 24 to 26 (DFN), Arg40, 63 to 66 (HLGR), Arg122, and Arg162 contribute to the substrate site. Residues Lys212, Glu331, and 361 to 364 (GGDS) each bind ATP.

Belongs to the phosphoglycerate kinase family. As to quaternary structure, monomer.

It is found in the cytoplasm. The catalysed reaction is (2R)-3-phosphoglycerate + ATP = (2R)-3-phospho-glyceroyl phosphate + ADP. Its pathway is carbohydrate degradation; glycolysis; pyruvate from D-glyceraldehyde 3-phosphate: step 2/5. This Corynebacterium aurimucosum (strain ATCC 700975 / DSM 44827 / CIP 107346 / CN-1) (Corynebacterium nigricans) protein is Phosphoglycerate kinase.